The chain runs to 140 residues: Nuclear receptor 2C2-associated protein (140 aa).

Belongs to the NR2C2AP family. As to quaternary structure, interacts with NR2C2/TR4.

It is found in the nucleus. In terms of biological role, may act as a repressor of NR2C2-mediated transactivation by suppressing the binding between NR2C2/TR4 and the TR4-response element in target genes. The protein is Nuclear receptor 2C2-associated protein (NR2C2AP) of Bos taurus (Bovine).